Reading from the N-terminus, the 71-residue chain is uncharacterized protein (71 aa).

Residues 1-16 are Cytoplasmic-facing; the sequence is MLLLYTVMILTCIIYK. A helical transmembrane segment spans residues 17-38; sequence LVPDNKYWPIHMFFFIMIYIVY. At 39-69 the chain is on the extracellular side; sequence MYEKLDIHEKSQFWNYTMARLSGHPVPTIIC. Asn53 carries N-linked (GlcNAc...) asparagine; by host glycosylation.

This sequence belongs to the asfivirus X69R family.

It localises to the host membrane. This is an uncharacterized protein from African swine fever virus (isolate Pig/Kenya/KEN-50/1950) (ASFV).